The chain runs to 704 residues: Elongation factor G (704 aa).

The region spanning 8–291 is the tr-type G domain; the sequence is DKVRNIGIMA…AVVEYLASPV (284 aa). Residues 17–24, 90–94, and 144–147 contribute to the GTP site; these read AHIDAGKT, DTPGH, and NKMD.

It belongs to the TRAFAC class translation factor GTPase superfamily. Classic translation factor GTPase family. EF-G/EF-2 subfamily.

Its subcellular location is the cytoplasm. Catalyzes the GTP-dependent ribosomal translocation step during translation elongation. During this step, the ribosome changes from the pre-translocational (PRE) to the post-translocational (POST) state as the newly formed A-site-bound peptidyl-tRNA and P-site-bound deacylated tRNA move to the P and E sites, respectively. Catalyzes the coordinated movement of the two tRNA molecules, the mRNA and conformational changes in the ribosome. This chain is Elongation factor G, found in Chlorobium limicola (strain DSM 245 / NBRC 103803 / 6330).